The primary structure comprises 442 residues: Probable D-serine dehydratase (442 aa).

K115 bears the N6-(pyridoxal phosphate)lysine mark.

It belongs to the serine/threonine dehydratase family. DsdA subfamily. Requires pyridoxal 5'-phosphate as cofactor.

The catalysed reaction is D-serine = pyruvate + NH4(+). The polypeptide is Probable D-serine dehydratase (Halalkalibacterium halodurans (strain ATCC BAA-125 / DSM 18197 / FERM 7344 / JCM 9153 / C-125) (Bacillus halodurans)).